A 285-amino-acid chain; its full sequence is MEDRNLERNIGSDISSSSSIDMSQSTNLEISIDQSINRNLEKIDISEDDVRRGEKKIESFENGENNNNNNNNNNNNNNNNNNNNNKNEDRKFKKTLFCIKMYIIQYFKKWLGTGKDKRPPIPDLEEIGWTWLASFTGILVLALIHYREALDAQMQVLIGSFAASAVIIFGVPKSPLAQPRNLIMGHFLSAVVGSVIRVALVYTNANFEVACALAVSLSIMLMQFTNSLHPPGGATALICVMGVEQRWRGFYFIFVPILSGALIMLLTALVVNNFARKRSYPLYWW.

Disordered stretches follow at residues 1–25 and 59–87; these read MEDR…MSQS and SFEN…NNKN. Low complexity-rich tracts occupy residues 12 to 25 and 65 to 85; these read SDIS…MSQS and NNNN…NNNN. The next 5 membrane-spanning stretches (helical) occupy residues 124-144, 152-172, 182-202, 205-225, and 250-270; these read LEEI…LALI, AQMQ…FGVP, LIMG…ALVY, ANFE…MQFT, and FYFI…TALV.

The protein localises to the membrane. In Dictyostelium discoideum (Social amoeba), this protein is Transmembrane protein DDB_G0269096.